A 114-amino-acid polypeptide reads, in one-letter code: Tyrosine-protein phosphatase 13 (114 aa).

The Tyrosine-protein phosphatase domain maps to 1–114 (WRMLWEHNST…QFGQEGPITI (114 aa)). Glu82 is a substrate binding site.

This sequence belongs to the protein-tyrosine phosphatase family.

It carries out the reaction O-phospho-L-tyrosyl-[protein] + H2O = L-tyrosyl-[protein] + phosphate. The protein is Tyrosine-protein phosphatase 13 (STY-13) of Styela plicata (Wrinkled sea squirt).